Reading from the N-terminus, the 270-residue chain is Putative methylsterol monooxygenase DDB_G0269788 (270 aa).

3 consecutive transmembrane segments (helical) span residues 31–51 (FIAHEVFYFGSFIPFFLCDFM), 82–102 (IFVQLPMMYIFDPAIKAIGLS), and 110–130 (IPYLIFTIACCFLIEDFYFYW). Positions 118-249 (ACCFLIEDFY…FTYLDKIFGT (132 aa)) constitute a Fatty acid hydroxylase domain. The Histidine box-1 signature appears at 132–136 (HRALH). The short motif at 145–149 (HKVHH) is the Histidine box-2 element. The Histidine box-3 signature appears at 224–230 (FHDFHHE).

Belongs to the sterol desaturase family. Requires Fe cation as cofactor.

The protein localises to the endoplasmic reticulum membrane. It carries out the reaction 4,4-dimethyl-5alpha-cholest-7-en-3beta-ol + 6 Fe(II)-[cytochrome b5] + 3 O2 + 5 H(+) = 4alpha-carboxy-4beta-methyl-5alpha-cholest-7-ene-3beta-ol + 6 Fe(III)-[cytochrome b5] + 4 H2O. It functions in the pathway steroid biosynthesis; zymosterol biosynthesis; zymosterol from lanosterol: step 3/6. In Dictyostelium discoideum (Social amoeba), this protein is Putative methylsterol monooxygenase DDB_G0269788.